The following is a 327-amino-acid chain: Ornithine carbamoyltransferase (327 aa).

Carbamoyl phosphate-binding positions include 56 to 59 (STRT), Gln83, Arg107, and 134 to 137 (HPTQ). L-ornithine contacts are provided by residues Asn166, Asp230, and 234–235 (SM). Residues 269–270 (CL) and Arg314 contribute to the carbamoyl phosphate site.

The protein belongs to the aspartate/ornithine carbamoyltransferase superfamily. OTCase family.

The protein localises to the cytoplasm. The enzyme catalyses carbamoyl phosphate + L-ornithine = L-citrulline + phosphate + H(+). It participates in amino-acid degradation; L-arginine degradation via ADI pathway; carbamoyl phosphate from L-arginine: step 2/2. Functionally, reversibly catalyzes the transfer of the carbamoyl group from carbamoyl phosphate (CP) to the N(epsilon) atom of ornithine (ORN) to produce L-citrulline. This is Ornithine carbamoyltransferase from Borreliella burgdorferi (strain ZS7) (Borrelia burgdorferi).